A 304-amino-acid polypeptide reads, in one-letter code: Ribokinase (304 aa).

Substrate-binding positions include 12 to 14 (NVD), 41 to 45 (GKGAN), and glutamate 142. ATP is bound by residues asparagine 186 and 222–227 (TLGKQG). Positions 248 and 250 each coordinate K(+). ATP is bound by residues 253–254 (GD) and asparagine 279. Residue aspartate 254 coordinates substrate. Aspartate 254 acts as the Proton acceptor in catalysis. Positions 285, 288, 290, and 294 each coordinate K(+).

The protein belongs to the carbohydrate kinase PfkB family. Ribokinase subfamily. As to quaternary structure, homodimer. It depends on Mg(2+) as a cofactor.

It localises to the cytoplasm. The enzyme catalyses D-ribose + ATP = D-ribose 5-phosphate + ADP + H(+). The protein operates within carbohydrate metabolism; D-ribose degradation; D-ribose 5-phosphate from beta-D-ribopyranose: step 2/2. With respect to regulation, activated by a monovalent cation that binds near, but not in, the active site. The most likely occupant of the site in vivo is potassium. Ion binding induces a conformational change that may alter substrate affinity. In terms of biological role, catalyzes the phosphorylation of ribose at O-5 in a reaction requiring ATP and magnesium. The resulting D-ribose-5-phosphate can then be used either for sythesis of nucleotides, histidine, and tryptophan, or as a component of the pentose phosphate pathway. This Staphylococcus aureus (strain COL) protein is Ribokinase.